A 108-amino-acid chain; its full sequence is MFSRIAAVSFLALPLLAAATPVLRRGDCNTGPIQCCQSTETAGSAAGSALLGLLGVVVQSVDVVLGLNCSPISVIGVGSGSACDASPVCCENNSVGGIISIGCVPIQL.

A signal peptide spans methionine 1–alanine 19. 4 disulfide bridges follow: cysteine 28–cysteine 89, cysteine 35–cysteine 83, cysteine 36–cysteine 69, and cysteine 90–cysteine 103. Asparagine 92 is a glycosylation site (N-linked (GlcNAc...) asparagine).

It belongs to the fungal hydrophobin family. As to quaternary structure, self-assembles to form functional amyloid fibrils called rodlets with a diameter of 15-30 nm. Self-assembly into fibrillar rodlets occurs spontaneously at hydrophobic:hydrophilic interfaces and the rodlets further associate laterally to form amphipathic monolayers. As to expression, highky expressed in hyphae cultured in liquid medium.

It localises to the secreted. It is found in the cell wall. Aerial growth, conidiation, and dispersal of filamentous fungi in the environment rely upon a capability of their secreting small amphipathic proteins called hydrophobins (HPBs) with low sequence identity. Class I can self-assemble into an outermost layer of rodlet bundles on aerial cell surfaces, conferring cellular hydrophobicity that supports fungal growth, development and dispersal; whereas Class II form highly ordered films at water-air interfaces through intermolecular interactions but contribute nothing to the rodlet structure. HgfII is a class I hydrophobin that is involved in cell surface hydrophobicity and might play a key role during the growth and development of hyphae cultured in liquid medium. The polypeptide is Class I hydrophobin hgfII (Grifola frondosa (Maitake)).